The chain runs to 130 residues: uncharacterized protein (130 aa).

A run of 3 helical transmembrane segments spans residues 34 to 54, 73 to 93, and 107 to 127; these read AILI…FAFF, LLLT…GWLA, and FGTG…IVWI.

The protein resides in the cell membrane. This is an uncharacterized protein from Mycoplasma pneumoniae (strain ATCC 29342 / M129 / Subtype 1) (Mycoplasmoides pneumoniae).